The primary structure comprises 295 residues: Glycine--tRNA ligase alpha subunit (295 aa).

The protein belongs to the class-II aminoacyl-tRNA synthetase family. In terms of assembly, tetramer of two alpha and two beta subunits.

The protein localises to the cytoplasm. It catalyses the reaction tRNA(Gly) + glycine + ATP = glycyl-tRNA(Gly) + AMP + diphosphate. This Shouchella clausii (strain KSM-K16) (Alkalihalobacillus clausii) protein is Glycine--tRNA ligase alpha subunit.